We begin with the raw amino-acid sequence, 651 residues long: MFCWLSRLCGELSTPTRRTTQLIWSSAARSMVLSSQRIPELSSFVARTNTCGELRSSHLGQEVTLCGWIQFRRQNIFLVLRDFHGLVQVVIPQDESAASVKKILCEAPMESVVQVSGTVISRPPGQKNPKMPTGEIEIKVKTAKLLNSCKKLPFEIKDFMKKTETLRLQYRYLDLRSVQMQYNLRLRSQMVMKMREYLCNLHGFVDVETPTLFKRTPGGAKEFVIPSREPGKFYSLPQSPQQFKQLLMVGGLDRYFQVARCYRDEGSRPDRQPEFTQIDIEMSFVDQTGVQSLIEGLLQYSWPSDKDPLVVPFPSMPFAEALASYGTDKPDTRFGMKIVDISDMFRNTEVGFLQDALSKPQGTVKAICIRKGAKYLKRKDIESIRKFAADHFNEEVLPIFLKTNENWNSPVAKFIMEEQGLGLVKLLETQEEDVVLLTAGEHKKACSLMGKLRLECADLLEARGVVLRDPALFSFLWVVDFPLFLPKEENPQELESAHHPFTAPHPSDIHLLYTEPHKVRSQHYDLVLNGNEIGGGSIRIHNSELQHCVLDTVLKEDVKLLSHLLQALDYGAPPHGGIALGLDRLMCLVTGAPSIRDVIAFPKSFRGHDLMSNAPDSIPPEELKPYHIQVSWPMDAETEKSSSNHPCRSES.

The transit peptide at 1–44 directs the protein to the mitochondrion; that stretch reads MFCWLSRLCGELSTPTRRTTQLIWSSAARSMVLSSQRIPELSSF. Residue threonine 216 is modified to Phosphothreonine. Residue serine 239 is modified to Phosphoserine. The aspartate stretch occupies residues 241 to 244; sequence QQFK. Arginine 263 is a binding site for L-aspartate. Residue 263 to 265 coordinates ATP; the sequence is RDE. Residue lysine 379 is modified to N6-acetyllysine. Residue glutamate 532 coordinates ATP. Residue arginine 539 coordinates L-aspartate. 581-584 serves as a coordination point for ATP; that stretch reads GLDR.

It belongs to the class-II aminoacyl-tRNA synthetase family. Type 1 subfamily. As to quaternary structure, homodimer.

The protein resides in the mitochondrion matrix. It is found in the mitochondrion membrane. It carries out the reaction tRNA(Asp) + L-aspartate + ATP = L-aspartyl-tRNA(Asp) + AMP + diphosphate. Catalyzes the attachment of aspartate to tRNA(Asp) in a two-step reaction: aspartate is first activated by ATP to form Asp-AMP and then transferred to the acceptor end of tRNA(Asp). The sequence is that of Aspartate--tRNA ligase, mitochondrial (DARS2) from Bos taurus (Bovine).